The chain runs to 88 residues: Pape peptide (88 aa).

A signal peptide spans 1 to 22 (MNRKTLLVIFFVTLLIAEEVNS). Residues 23–45 (FRLGGFLKKIWRSKLVKRLRSKG) constitute a propeptide that is removed on maturation. Residues 49–88 (LKEALAPEPAPEPAPEPAPEAAPEAAPEPAAAAPERRRRR) are disordered. The span at 56 to 68 (EPAPEPAPEPAPE) shows a compositional bias: pro residues. PAPE repeat units lie at residues 57 to 60 (PAPE), 61 to 64 (PAPE), and 65 to 68 (PAPE). Residues 69–81 (AAPEAAPEPAAAA) show a composition bias toward low complexity.

As to expression, expressed by the venom gland.

The protein localises to the secreted. This Tityus serrulatus (Brazilian scorpion) protein is Pape peptide.